The following is a 149-amino-acid chain: D-aminoacyl-tRNA deacylase (149 aa).

Residues 137 to 138 (GP) carry the Gly-cisPro motif, important for rejection of L-amino acids motif.

The protein belongs to the DTD family. In terms of assembly, homodimer.

The protein localises to the cytoplasm. The enzyme catalyses glycyl-tRNA(Ala) + H2O = tRNA(Ala) + glycine + H(+). The catalysed reaction is a D-aminoacyl-tRNA + H2O = a tRNA + a D-alpha-amino acid + H(+). Its function is as follows. An aminoacyl-tRNA editing enzyme that deacylates mischarged D-aminoacyl-tRNAs. Also deacylates mischarged glycyl-tRNA(Ala), protecting cells against glycine mischarging by AlaRS. Acts via tRNA-based rather than protein-based catalysis; rejects L-amino acids rather than detecting D-amino acids in the active site. By recycling D-aminoacyl-tRNA to D-amino acids and free tRNA molecules, this enzyme counteracts the toxicity associated with the formation of D-aminoacyl-tRNA entities in vivo and helps enforce protein L-homochirality. The chain is D-aminoacyl-tRNA deacylase from Alkaliphilus metalliredigens (strain QYMF).